A 270-amino-acid chain; its full sequence is NAD kinase (270 aa).

The active-site Proton acceptor is D62. Residues 62-63 (DG), R67, 129-130 (ND), K140, D159, I167, 170-175 (TSYSFS), A194, and Q227 contribute to the NAD(+) site.

This sequence belongs to the NAD kinase family. A divalent metal cation is required as a cofactor.

The protein resides in the cytoplasm. It catalyses the reaction NAD(+) + ATP = ADP + NADP(+) + H(+). In terms of biological role, involved in the regulation of the intracellular balance of NAD and NADP, and is a key enzyme in the biosynthesis of NADP. Catalyzes specifically the phosphorylation on 2'-hydroxyl of the adenosine moiety of NAD to yield NADP. The sequence is that of NAD kinase from Picrophilus torridus (strain ATCC 700027 / DSM 9790 / JCM 10055 / NBRC 100828 / KAW 2/3).